Here is a 560-residue protein sequence, read N- to C-terminus: Membrane protein insertase YidC (560 aa).

Residues 7 to 27 (ILIVALAIVSYVMVLKWNQDY) traverse the membrane as a helical segment. The interval 43–72 (APAIPDTPLGNNASASADVPSANGETSAPL) is disordered. 4 helical membrane passes run 367 to 387 (IVGN…GIFF), 437 to 457 (LGGC…YWVL), 468 to 488 (FMLW…PIIM), and 515 to 535 (PIIF…YWVV).

Belongs to the OXA1/ALB3/YidC family. Type 1 subfamily. In terms of assembly, interacts with the Sec translocase complex via SecD. Specifically interacts with transmembrane segments of nascent integral membrane proteins during membrane integration.

It is found in the cell inner membrane. Functionally, required for the insertion and/or proper folding and/or complex formation of integral membrane proteins into the membrane. Involved in integration of membrane proteins that insert both dependently and independently of the Sec translocase complex, as well as at least some lipoproteins. Aids folding of multispanning membrane proteins. This Pseudomonas fluorescens (strain SBW25) protein is Membrane protein insertase YidC.